Consider the following 493-residue polypeptide: Solute carrier family 2, facilitated glucose transporter member 3 (493 aa).

Topologically, residues 1 to 10 (MGTTKVTPSL) are cytoplasmic. Residues 11 to 32 (VFAVTVATIGSFQFGYNTGVIN) traverse the membrane as a helical segment. At 33 to 64 (APETILKDFLNYTLEERLEDLPSEGLLTALWS) the chain is on the extracellular side. Asn-43 is a glycosylation site (N-linked (GlcNAc...) asparagine). The helical transmembrane segment at 65–85 (LCVAIFSVGGMIGSFSVGLFV) threads the bilayer. Topologically, residues 86–90 (NRFGR) are cytoplasmic. The chain crosses the membrane as a helical span at residues 91–111 (RNSMLLVNLLAIIAGCLMGFA). Topologically, residues 112-118 (KIAESVE) are extracellular. Residues 119–142 (MLILGRLLIGIFCGLCTGFVPMYI) form a helical membrane-spanning segment. At 143–153 (GEVSPTALRGA) the chain is on the cytoplasmic side. The helical transmembrane segment at 154–174 (FGTLNQLGIVVGILVAQIFGL) threads the bilayer. Residue Gln-159 coordinates D-glucose. Residues 175 to 183 (DFILGSEEL) lie on the Extracellular side of the membrane. A helical transmembrane segment spans residues 184–204 (WPGLLGLTIIPAILQSAALPF). The Cytoplasmic segment spans residues 205-269 (CPESPRFLLI…LFRSPNYVQP (65 aa)). At Thr-232 the chain carries Phosphothreonine. The chain crosses the membrane as a helical span at residues 270–290 (LLISIVLQLSQQLSGINAVFY). The segment at 277-279 (QLS) is important for selectivity against fructose. Residues 280–281 (QQ) and Asn-286 each bind D-glucose. Residues 291-304 (YSTGIFKDAGVQEP) lie on the Extracellular side of the membrane. The helical transmembrane segment at 305–325 (IYATIGAGVVNTIFTVVSLFL) threads the bilayer. Residue Asn-315 coordinates D-glucose. The Cytoplasmic segment spans residues 326 to 331 (VERAGR). The chain crosses the membrane as a helical span at residues 332 to 352 (RTLHMIGLGGMAVCSVFMTIS). The Extracellular segment spans residues 353-363 (LLLKDDYEAMS). Residues 364 to 389 (FVCIVAILIYVAFFEIGPGPIPWFIV) traverse the membrane as a helical segment. The D-glucose site is built by Glu-378 and Trp-386. Over 390-399 (AELFSQGPRP) the chain is Cytoplasmic. The chain crosses the membrane as a helical span at residues 400–420 (AAIAVAGCCNWTSNFLVGMLF). The Extracellular segment spans residues 421-429 (PSAAAYLGA). A helical membrane pass occupies residues 430–450 (YVFIIFAAFLIFFLIFTFFKV). Topologically, residues 451–493 (PETKGRTFEDIARAFEGQAHSGKGPAGVELNSMQPVKETPGNA) are cytoplasmic. The disordered stretch occupies residues 469-493 (AHSGKGPAGVELNSMQPVKETPGNA). Phosphoserine is present on residues Ser-471 and Ser-482. Thr-489 is subject to Phosphothreonine.

It belongs to the major facilitator superfamily. Sugar transporter (TC 2.A.1.1) family. Glucose transporter subfamily. In terms of assembly, interacts with SMIM43; the interaction may promote SLC2A3-mediated glucose transport to meet the energy needs of mesendoderm differentiation. As to expression, expressed in spermatozoa (at protein level). Detected in brain (at protein level). Abundantly expressed in the hippocampus, cerebellum and cerebral cortex with lower expression in the dentate gyrus and piriform cortex.

It localises to the cell membrane. Its subcellular location is the perikaryon. The protein localises to the cell projection. It carries out the reaction D-glucose(out) = D-glucose(in). It catalyses the reaction D-galactose(in) = D-galactose(out). Its activity is regulated as follows. Deoxyglucose transport is inhibited by D-glucose, D-galactose and maltose. Galactose transport is inhibited by D-glucose and maltose. Functionally, facilitative glucose transporter. Can also mediate the uptake of various other monosaccharides across the cell membrane. Mediates the uptake of glucose, 2-deoxyglucose, galactose, mannose, xylose and fucose, and probably also dehydroascorbate. Does not mediate fructose transport. Required for mesendoderm differentiation. In Mus musculus (Mouse), this protein is Solute carrier family 2, facilitated glucose transporter member 3.